The chain runs to 228 residues: Ankyrin repeat domain-containing protein 46 (228 aa).

4 ANK repeats span residues 11-40 (QTNV…DPNI), 44-73 (RGRT…DLLA), 77-103 (QGNT…KIDI), and 107-138 (QGAT…EVKG). A helical transmembrane segment spans residues 195–215 (VLLLIFVIALLSLGIAYYVSG).

The protein localises to the membrane. The chain is Ankyrin repeat domain-containing protein 46 (ANKRD46) from Pongo abelii (Sumatran orangutan).